The chain runs to 466 residues: Argininosuccinate lyase (466 aa).

This sequence belongs to the lyase 1 family. Argininosuccinate lyase subfamily.

It localises to the cytoplasm. It catalyses the reaction 2-(N(omega)-L-arginino)succinate = fumarate + L-arginine. It participates in amino-acid biosynthesis; L-arginine biosynthesis; L-arginine from L-ornithine and carbamoyl phosphate: step 3/3. This Microcystis aeruginosa (strain NIES-843 / IAM M-2473) protein is Argininosuccinate lyase.